The primary structure comprises 375 residues: 23S rRNA (uracil(747)-C(5))-methyltransferase RlmC (375 aa).

[4Fe-4S] cluster-binding residues include C3, C11, C14, and C87. 4 residues coordinate S-adenosyl-L-methionine: Q212, F241, E262, and N307. The Nucleophile role is filled by C334.

Belongs to the class I-like SAM-binding methyltransferase superfamily. RNA M5U methyltransferase family. RlmC subfamily.

It catalyses the reaction uridine(747) in 23S rRNA + S-adenosyl-L-methionine = 5-methyluridine(747) in 23S rRNA + S-adenosyl-L-homocysteine + H(+). Functionally, catalyzes the formation of 5-methyl-uridine at position 747 (m5U747) in 23S rRNA. This chain is 23S rRNA (uracil(747)-C(5))-methyltransferase RlmC, found in Serratia proteamaculans (strain 568).